An 85-amino-acid chain; its full sequence is UPF0335 protein Plav_2034 (85 aa).

It belongs to the UPF0335 family.

The polypeptide is UPF0335 protein Plav_2034 (Parvibaculum lavamentivorans (strain DS-1 / DSM 13023 / NCIMB 13966)).